The following is a 238-amino-acid chain: MGNKNIKPSKENRLSILSKDKMDSFKRGSFREKSRATIQRFSSLRREHIKVDHPDKFLELKRGIYEIIQKSSSIDVDKRTKLMSNIKTMMINPFMIEGLMTSLENLDPDNKMSYSSVMILGEFDIINISDNEAAFEFINSLLKSLLLEYSISNDLLYAHINALEYIIKNTFNVPERQLILRGQYLTPIFSDLLKYAGLTIKSNILMWNKQFIKPVSDLYTSIRLLHCVTESYKVIGMG.

This sequence belongs to the orthopoxvirus A47 protein family.

In Vaccinia virus (strain Ankara) (VACV), this protein is Protein A47.